A 238-amino-acid polypeptide reads, in one-letter code: Urease accessory protein UreF (238 aa).

Belongs to the UreF family. In terms of assembly, ureD, UreF and UreG form a complex that acts as a GTP-hydrolysis-dependent molecular chaperone, activating the urease apoprotein by helping to assemble the nickel containing metallocenter of UreC. The UreE protein probably delivers the nickel.

The protein resides in the cytoplasm. Functionally, required for maturation of urease via the functional incorporation of the urease nickel metallocenter. The chain is Urease accessory protein UreF from Delftia acidovorans (strain DSM 14801 / SPH-1).